A 648-amino-acid polypeptide reads, in one-letter code: Indolepyruvate oxidoreductase subunit IorA (648 aa).

2 4Fe-4S ferredoxin-type domains span residues 585-614 and 616-645; these read PIYQVNEDKCTGCKICINAYGCPAIYWDPE and KKAKVDPLMCWGCGGCAQVCPFDAFEKVRE. [4Fe-4S] cluster-binding residues include cysteine 594, cysteine 597, cysteine 600, cysteine 606, cysteine 625, cysteine 628, cysteine 631, and cysteine 635.

Heterodimer of the IorA and IorB subunits. Requires [4Fe-4S] cluster as cofactor.

It catalyses the reaction indole-3-pyruvate + 2 oxidized [2Fe-2S]-[ferredoxin] + CoA = (indol-3-yl)acetyl-CoA + 2 reduced [2Fe-2S]-[ferredoxin] + CO2 + H(+). Its function is as follows. Catalyzes the ferredoxin-dependent oxidative decarboxylation of arylpyruvates. The sequence is that of Indolepyruvate oxidoreductase subunit IorA (iorA) from Pyrococcus abyssi (strain GE5 / Orsay).